The following is an 879-amino-acid chain: Aminopeptidase M1 (879 aa).

The tract at residues 98-205 (HGVGVLKLGF…MSTYLVAIVV (108 aa)) is required for membrane association. Substrate contacts are provided by residues Glu-138 and 271–275 (GAMEN). His-307 is a binding site for Zn(2+). The Proton acceptor role is filled by Glu-308. Zn(2+)-binding residues include His-311 and Glu-330. The Dileucine internalization motif motif lies at 728–729 (LL).

It belongs to the peptidase M1 family. In terms of assembly, homodimer. Interacts with N-1-naphthylphthalamic acid (NPA). Requires Zn(2+) as cofactor. As to expression, ubiquitous with preferential expression in 5 days-old seedlings, roots, young flowers, upper inflorescence stems, and rosette leaves.

It localises to the membrane. Its subcellular location is the microsome membrane. The protein localises to the cytoplasm. The catalysed reaction is Release of an N-terminal amino acid, Xaa-|-Yaa- from a peptide, amide or arylamide. Xaa is preferably Ala, but may be most amino acids including Pro (slow action). When a terminal hydrophobic residue is followed by a prolyl residue, the two may be released as an intact Xaa-Pro dipeptide.. Functionally, metallopeptidase that binds to the auxin transport inhibitor N-1-naphthylphthalamic acid (NPA). Required for embryonic and seedling development as well as cell cycle progression. Homodimerization is required to proper localization and activity. May play a negative role in the regulation of PIN auxin transport proteins. In Arabidopsis thaliana (Mouse-ear cress), this protein is Aminopeptidase M1 (APM1).